The chain runs to 267 residues: 2-keto-3-deoxy-L-rhamnonate aldolase (267 aa).

The active-site Proton acceptor is the H49. Substrate is bound at residue Q151. E153 lines the Mg(2+) pocket. Positions 178 and 179 each coordinate substrate. A Mg(2+)-binding site is contributed by D179.

It belongs to the HpcH/HpaI aldolase family. KDR aldolase subfamily. As to quaternary structure, homohexamer. It depends on Mg(2+) as a cofactor.

It carries out the reaction 2-dehydro-3-deoxy-L-rhamnonate = (S)-lactaldehyde + pyruvate. Catalyzes the reversible retro-aldol cleavage of 2-keto-3-deoxy-L-rhamnonate (KDR) to pyruvate and lactaldehyde. The polypeptide is 2-keto-3-deoxy-L-rhamnonate aldolase (Shigella sonnei (strain Ss046)).